The chain runs to 48 residues: Small, acid-soluble spore protein P (48 aa).

The segment covering 1–12 (MTNKNTSKDMHK) has biased composition (basic and acidic residues). The interval 1-48 (MTNKNTSKDMHKNAPKGHNPGQPEPLSGSKKVKNRNHTRQKHNTSHDM) is disordered. Basic residues predominate over residues 30-48 (KKVKNRNHTRQKHNTSHDM).

Belongs to the SspP family.

Its subcellular location is the spore core. The protein is Small, acid-soluble spore protein P of Bacillus velezensis (strain DSM 23117 / BGSC 10A6 / LMG 26770 / FZB42) (Bacillus amyloliquefaciens subsp. plantarum).